The primary structure comprises 203 residues: Peptide deformylase (203 aa).

Residues Cys130 and His173 each contribute to the Fe cation site. Glu174 is a catalytic residue. His177 contacts Fe cation.

This sequence belongs to the polypeptide deformylase family. Requires Fe(2+) as cofactor.

It catalyses the reaction N-terminal N-formyl-L-methionyl-[peptide] + H2O = N-terminal L-methionyl-[peptide] + formate. Functionally, removes the formyl group from the N-terminal Met of newly synthesized proteins. Requires at least a dipeptide for an efficient rate of reaction. N-terminal L-methionine is a prerequisite for activity but the enzyme has broad specificity at other positions. The polypeptide is Peptide deformylase (Streptococcus pneumoniae serotype 19F (strain G54)).